Reading from the N-terminus, the 218-residue chain is GTP cyclohydrolase 1 (218 aa).

Residues C109, H112, and C180 each coordinate Zn(2+).

The protein belongs to the GTP cyclohydrolase I family. As to quaternary structure, toroid-shaped homodecamer, composed of two pentamers of five dimers.

The catalysed reaction is GTP + H2O = 7,8-dihydroneopterin 3'-triphosphate + formate + H(+). It functions in the pathway cofactor biosynthesis; 7,8-dihydroneopterin triphosphate biosynthesis; 7,8-dihydroneopterin triphosphate from GTP: step 1/1. The polypeptide is GTP cyclohydrolase 1 (Aeromonas salmonicida (strain A449)).